The chain runs to 103 residues: N(4)-acetylcytidine amidohydrolase (103 aa).

Residues 6–94 (ITFFQRFQDD…IAGIYPDQTQ (89 aa)) enclose the ASCH domain. Catalysis depends on Lys21, which acts as the Proton acceptor. Thr24 acts as the Nucleophile in catalysis. The Proton donor role is filled by Glu74.

Belongs to the N(4)-acetylcytidine amidohydrolase family.

The enzyme catalyses N(4)-acetylcytidine + H2O = cytidine + acetate + H(+). The catalysed reaction is N(4)-acetyl-2'-deoxycytidine + H2O = 2'-deoxycytidine + acetate + H(+). It catalyses the reaction N(4)-acetylcytosine + H2O = cytosine + acetate + H(+). Functionally, catalyzes the hydrolysis of N(4)-acetylcytidine (ac4C). The sequence is that of N(4)-acetylcytidine amidohydrolase from Citrobacter koseri (strain ATCC BAA-895 / CDC 4225-83 / SGSC4696).